A 65-amino-acid chain; its full sequence is LTCVTSKSIFGITTEDCPDGQNLCFKRRHYVVPKIYDITRGCVATCPIPENYDSIHCCKTDKCNE.

Disulfide bonds link cysteine 3–cysteine 24, cysteine 17–cysteine 42, cysteine 46–cysteine 57, and cysteine 58–cysteine 63.

This sequence belongs to the three-finger toxin family. Short-chain subfamily. Aminergic toxin sub-subfamily. In terms of tissue distribution, expressed by the venom gland.

The protein resides in the secreted. This toxin shows activities on different G-protein coupled receptors. It is highly potent on various alpha-adrenoceptors (ADRA) (subnanomolar affinity for ADRA1A). Order of potency is the following: ADRA1A &gt; ADRA1B &gt; ADRA1D &gt; ADRA2C. It is also found to reversibly bind to muscarinic acetylcholine receptors (CHRM), but the affinity is much weaker (CHRM1 and CHRM2, Ki&gt;1 uM; CHRM3, Ki=140 nM; CHRM4, Ki=120 nM; CHRM5, Ki=350 nM). This chain is Adrenergic toxin rho-elapitoxin-Dp1a, found in Dendroaspis polylepis polylepis (Black mamba).